A 576-amino-acid polypeptide reads, in one-letter code: MGICHGKPVEQQSKSLPVSGETNEAPTNSQPPAKSSGFPFYSPSPVPSLFKSSPSVSSSVSSTPLRIFKRPFPPPSPAKHIRAFLARRYGSVKPNEVSIPEGKECEIGLDKSFGFSKQFASHYEIDGEVGRGHFGYTCSAKGKKGSLKGQEVAVKVIPKSKMTTAIAIEDVSREVKMLRALTGHKNLVQFYDAFEDDENVYIVMELCKGGELLDKILQRGGKYSEDDAKKVMVQILSVVAYCHLQGVVHRDLKPENFLFSTKDETSPLKAIDFGLSDYVKPDERLNDIVGSAYYVAPEVLHRTYGTEADMWSIGVIAYILLCGSRPFWARTESGIFRAVLKAEPNFEEAPWPSLSPEAVDFVKRLLNKDYRKRLTAAQALCHPWLVGSHELKIPSDMIIYKLVKVYIMSTSLRKSALAALAKTLTVPQLAYLREQFTLLGPSKNGYISMQNYKTAILKSSTDAMKDSRVFDFVHMISCLQYKKLDFEEFCASALSVYQLEAMETWEQHARRAYELFEKDGNRPIMIEELASELGLGPSVPVHVVLQDWIRHSDGKLSFLGFVRLLHGVSSRTLQKA.

Residues 1–39 are disordered; the sequence is MGICHGKPVEQQSKSLPVSGETNEAPTNSQPPAKSSGFP. A lipid anchor (N-myristoyl glycine) is attached at Gly2. The segment covering 10-33 has biased composition (polar residues); that stretch reads EQQSKSLPVSGETNEAPTNSQPPA. The Protein kinase domain occupies 123–385; it reads YEIDGEVGRG…AAQALCHPWL (263 aa). Residues 129–137 and Lys155 each bind ATP; that span reads VGRGHFGYT. Asp251 (proton acceptor) is an active-site residue. The residue at position 291 (Ser291) is a Phosphoserine. Ser333 carries the phosphoserine; by CPK1 and CPK34 modification. Positions 390–420 are autoinhibitory domain; that stretch reads ELKIPSDMIIYKLVKVYIMSTSLRKSALAAL. The interval 409-429 is calmodulin binding (CaMBD); sequence STSLRKSALAALAKTLTVPQL. EF-hand domains follow at residues 427-463, 464-499, 500-539, and 542-571; these read PQLAYLREQFTLLGPSKNGYISMQNYKTAILKSSTDA, MKDSRVFDFVHMISCLQYKKLDFEEFCASALSVYQL, EAMETWEQHARRAYELFEKDGNRPIMIEELASELGLGPSV, and HVVLQDWIRHSDGKLSFLGFVRLLHGVSSR. Positions 442, 444, 446, 483, 488, 519, 521, 528, 553, and 555 each coordinate Ca(2+). Ser557 bears the Phosphoserine mark.

This sequence belongs to the protein kinase superfamily. Ser/Thr protein kinase family. CDPK subfamily. As to quaternary structure, binds calmodulin (CaM) in a calcium-dependent manner. Interacts with HSFA1A. In terms of processing, autophosphorylated.

It localises to the membrane. The catalysed reaction is L-seryl-[protein] + ATP = O-phospho-L-seryl-[protein] + ADP + H(+). It catalyses the reaction L-threonyl-[protein] + ATP = O-phospho-L-threonyl-[protein] + ADP + H(+). Activated by calcium and calmodulin. Autophosphorylation may play an important role in the regulation of the kinase activity. May play a role in signal transduction pathways that involve calcium as a second messenger. Serine/threonine kinase that phosphorylates histone H3. Confers thermotolerance; involved in the heat-shock-mediated calmodulin-dependent signal transduction leading to the activation of heat-shock transcription factors (HSFs); phosphorylates HSFA1A. The polypeptide is CDPK-related kinase 1 (CRK1) (Arabidopsis thaliana (Mouse-ear cress)).